We begin with the raw amino-acid sequence, 392 residues long: Ribonuclease D (392 aa).

The 3'-5' exonuclease domain maps to 12–178; it reads LIETTEALAA…PVYEGLRARL (167 aa). Residues 217–298 form the HRDC domain; that stretch reads NRRQLALVKA…ASTKAIPDAE (82 aa).

Belongs to the RNase D family. A divalent metal cation serves as cofactor.

Its subcellular location is the cytoplasm. The enzyme catalyses Exonucleolytic cleavage that removes extra residues from the 3'-terminus of tRNA to produce 5'-mononucleotides.. Its function is as follows. Exonuclease involved in the 3' processing of various precursor tRNAs. Initiates hydrolysis at the 3'-terminus of an RNA molecule and releases 5'-mononucleotides. In Acidiphilium cryptum (strain JF-5), this protein is Ribonuclease D.